We begin with the raw amino-acid sequence, 249 residues long: Small ribosomal subunit protein uS2 (249 aa).

The protein belongs to the universal ribosomal protein uS2 family.

The sequence is that of Small ribosomal subunit protein uS2 from Acinetobacter baylyi (strain ATCC 33305 / BD413 / ADP1).